Reading from the N-terminus, the 198-residue chain is Photosystem I assembly protein Ycf4 (198 aa).

2 consecutive transmembrane segments (helical) span residues Trp-35–Ile-57 and Ile-70–Asn-92.

Belongs to the Ycf4 family.

It localises to the plastid. The protein localises to the chloroplast thylakoid membrane. Seems to be required for the assembly of the photosystem I complex. The protein is Photosystem I assembly protein Ycf4 of Euglena gracilis.